Here is a 415-residue protein sequence, read N- to C-terminus: Mechanosensing system component YbdG (415 aa).

The Periplasmic portion of the chain corresponds to 1 to 24 (MQDLISQVEDLAGIEIDHTTSMVM). Residues 25–45 (IFGIIFLTAVVVHIILHWVVL) form a helical membrane-spanning segment. Residues 46 to 67 (RTFEKRAIASSRLWLQIITQNK) lie on the Cytoplasmic side of the membrane. The helical transmembrane segment at 68–88 (LFHRLAFTLQGIIVNIQAVFW) threads the bilayer. Topologically, residues 89 to 104 (LQKGTEAADILTTCAQ) are periplasmic. A helical membrane pass occupies residues 105 to 125 (LWIMMYALLSVFSLLDVILNL). The Cytoplasmic segment spans residues 126 to 148 (AQKFPAASQLPLKGIFQGIKLIG). A helical membrane pass occupies residues 149–169 (AILVGILMISLLIGQSPAILI). At 170-173 (SGLG) the chain is on the periplasmic side. Residues 174–194 (AMAAVLMLVFKDPILGLVAGI) traverse the membrane as a helical segment. Residues 195–415 (QLSANDMLKL…IRSLAGAFKQ (221 aa)) are Cytoplasmic-facing.

Belongs to the MscS (TC 1.A.23) family. As to quaternary structure, homoheptamer.

It is found in the cell inner membrane. Its function is as follows. Functions as a component of a mechanosensing system that transmits signals triggered by external osmotic changes to intracellular factors. The polypeptide is Mechanosensing system component YbdG (ybdG) (Shigella flexneri).